The primary structure comprises 164 residues: Sorting nexin-3 (164 aa).

A disordered region spans residues 1–26 (MSGKREFKSFGSTEETMFSQHHKIPS). The segment covering 10–26 (FGSTEETMFSQHHKIPS) has biased composition (polar residues). In terms of domain architecture, PX spans 40-163 (IEVRNPKTHV…IRFIEDDKFV (124 aa)). A 1,2-diacyl-sn-glycero-3-phospho-(1D-myo-inositol-3-phosphate)-binding residues include Arg-83, Ser-85, Lys-114, Arg-120, and Arg-129.

This sequence belongs to the sorting nexin family.

The protein resides in the cytoplasm. The protein localises to the golgi apparatus membrane. It localises to the prevacuolar compartment membrane. Required for retention of late Golgi membrane proteins. Component of the retrieval machinery that functions by direct interaction with the cytosolic tails of certain TGN membrane proteins during the sorting/budding process at the prevacuolar compartment. Binds phosphatidylinositol 3-phosphate (PtdIns(P3)). The polypeptide is Sorting nexin-3 (SNX3) (Candida glabrata (strain ATCC 2001 / BCRC 20586 / JCM 3761 / NBRC 0622 / NRRL Y-65 / CBS 138) (Yeast)).